A 274-amino-acid polypeptide reads, in one-letter code: MINKQLLKKRFNNHAKTYDAYADVQKSMAHQLINQLSTNFFNQEIAILEIGCGTGYLTQLLCKKFPKAAITAVDLSSGMIELAKKKVTEDRVSLICGDIEELSIERQYDLIISNATFQWFNSLHTTIKKLYKQLKPAGSLLFSTFGNGTFQELHSCYSHAKQKLGLFSNSSPGQSFFSLEELSQICEQALVPLREHPFKLSKMEKLEVQYFPTVQAFFTSIKKIGASNSNEESYCQRPSFFRQLINLYENNHRDENGVKVTYHCLMFNITKTNQ.

The protein belongs to the methyltransferase superfamily.

The enzyme catalyses malonyl-[ACP] + S-adenosyl-L-methionine = malonyl-[ACP] methyl ester + S-adenosyl-L-homocysteine. It participates in cofactor biosynthesis; biotin biosynthesis. Converts the free carboxyl group of a malonyl-thioester to its methyl ester by transfer of a methyl group from S-adenosyl-L-methionine (SAM). It allows to synthesize pimeloyl-ACP via the fatty acid synthetic pathway. This chain is Malonyl-[acyl-carrier protein] O-methyltransferase, found in Priestia megaterium (strain DSM 319 / IMG 1521) (Bacillus megaterium).